The sequence spans 251 residues: Flap endonuclease Xni (251 aa).

Asp-104 lines the Mg(2+) pocket. A 5'-3' exonuclease domain is found at 160 to 249 (VQPQQLPDYW…IDGNLQQLRL (90 aa)). Residues Leu-171, Ala-172, Pro-180, Val-182, and Ile-185 each coordinate K(+). An interaction with DNA region spans residues 184-189 (GIGPKS).

This sequence belongs to the Xni family. Mg(2+) is required as a cofactor. It depends on K(+) as a cofactor.

Has flap endonuclease activity. During DNA replication, flap endonucleases cleave the 5'-overhanging flap structure that is generated by displacement synthesis when DNA polymerase encounters the 5'-end of a downstream Okazaki fragment. In Escherichia coli O81 (strain ED1a), this protein is Flap endonuclease Xni.